The sequence spans 1045 residues: Fibrosin-1-like protein (1045 aa).

Residues 1–12 (MEAKVRPSRRSR) show a composition bias toward basic residues. Disordered stretches follow at residues 1-86 (MEAK…DGFA) and 99-315 (DMAL…THVP). Residues 13 to 28 (AQRDRGRRREAARDAR) are compositionally biased toward basic and acidic residues. Residues 48–63 (GLRGAPPRGAAPAPRT) are compositionally biased toward low complexity. Residues 99–123 (DMALKPHERKEKWERRLIKKPRESE) are compositionally biased toward basic and acidic residues. Residues 183 to 197 (EATSSRDPLSDSSAH) show a composition bias toward polar residues. The span at 270 to 280 (HAAPCPGPPPG) shows a compositional bias: pro residues. Position 340 is a phosphoserine (S340). The span at 443-457 (QHTHQHTHQHTHQHQ) shows a compositional bias: basic residues. 2 disordered regions span residues 443–462 (QHTH…TFAP) and 719–753 (EGSS…PKSV). The segment covering 741–750 (PSFPAPPPWP) has biased composition (pro residues). At S790 the chain carries Phosphoserine. Disordered stretches follow at residues 809–880 (ELGR…APLQ) and 910–961 (AAAP…PALD). A compositionally biased stretch (basic and acidic residues) spans 817-837 (AEREAEPRVKESRSPAKEEAA). K858 is covalently cross-linked (Glycyl lysine isopeptide (Lys-Gly) (interchain with G-Cter in SUMO2)). The span at 910–922 (AAAPAPGSAALLE) shows a compositional bias: low complexity. A compositionally biased stretch (basic and acidic residues) spans 923 to 949 (PPERPYRDREPHGYSPERLRGELERAR). S937 and S977 each carry phosphoserine. Phosphothreonine occurs at positions 989 and 1010. Residues 991–1045 (PAAAALGAPPPLVTAAGPPTPPGPPRSRTTPLGGLGPGEARDYSPSRNPPEVEAR) are disordered. Residues 998-1015 (APPPLVTAAGPPTPPGPP) are compositionally biased toward pro residues. Basic and acidic residues predominate over residues 1029–1045 (EARDYSPSRNPPEVEAR).

Belongs to the AUTS2 family.

The protein is Fibrosin-1-like protein (FBRSL1) of Homo sapiens (Human).